A 257-amino-acid chain; its full sequence is G2/mitotic-specific cyclin S13-7 (257 aa).

Belongs to the cyclin family. Cyclin AB subfamily. In terms of assembly, interacts with the CDC2 protein kinase to form a serine/threonine kinase holoenzyme complex also known as maturation promoting factor (MPF). The cyclin subunit imparts substrate specificity to the complex.

Essential for the control of the cell cycle at the G2/M (mitosis) transition. The chain is G2/mitotic-specific cyclin S13-7 from Glycine max (Soybean).